We begin with the raw amino-acid sequence, 311 residues long: 4-hydroxy-tetrahydrodipicolinate synthase (311 aa).

Thr51 lines the pyruvate pocket. Tyr140 serves as the catalytic Proton donor/acceptor. Lys168 (schiff-base intermediate with substrate) is an active-site residue. Ile209 contributes to the pyruvate binding site.

Belongs to the DapA family. As to quaternary structure, homotetramer; dimer of dimers.

Its subcellular location is the cytoplasm. The catalysed reaction is L-aspartate 4-semialdehyde + pyruvate = (2S,4S)-4-hydroxy-2,3,4,5-tetrahydrodipicolinate + H2O + H(+). It participates in amino-acid biosynthesis; L-lysine biosynthesis via DAP pathway; (S)-tetrahydrodipicolinate from L-aspartate: step 3/4. Functionally, catalyzes the condensation of (S)-aspartate-beta-semialdehyde [(S)-ASA] and pyruvate to 4-hydroxy-tetrahydrodipicolinate (HTPA). The protein is 4-hydroxy-tetrahydrodipicolinate synthase of Streptococcus pneumoniae (strain ATCC 700669 / Spain 23F-1).